A 202-amino-acid chain; its full sequence is MSALETQALGMIPMVIEQSGRGERSYDIYSRLLKERVIFLVGEVNDQTANLVVAQLLFLESENPDKDISFYINSPGGSVTAGMAIYDTMQFIKPDVSTLCCGFAASMGAFLLAAGAKGKRYSLPNSKIMIHQVLGGARGQATDIEIHARDILRTKEQMNRILAERTGQPIEKVKADTERDYFMTADEAKDYGIVDQVIAKRP.

Serine 106 acts as the Nucleophile in catalysis. Histidine 131 is an active-site residue.

The protein belongs to the peptidase S14 family. As to quaternary structure, fourteen ClpP subunits assemble into 2 heptameric rings which stack back to back to give a disk-like structure with a central cavity, resembling the structure of eukaryotic proteasomes.

It localises to the cytoplasm. The catalysed reaction is Hydrolysis of proteins to small peptides in the presence of ATP and magnesium. alpha-casein is the usual test substrate. In the absence of ATP, only oligopeptides shorter than five residues are hydrolyzed (such as succinyl-Leu-Tyr-|-NHMec, and Leu-Tyr-Leu-|-Tyr-Trp, in which cleavage of the -Tyr-|-Leu- and -Tyr-|-Trp bonds also occurs).. Cleaves peptides in various proteins in a process that requires ATP hydrolysis. Has a chymotrypsin-like activity. Plays a major role in the degradation of misfolded proteins. This is ATP-dependent Clp protease proteolytic subunit from Acidovorax sp. (strain JS42).